The chain runs to 153 residues: Pheromone-binding protein Gp-9 (153 aa).

The first 19 residues, Met-1–Ala-19, serve as a signal peptide directing secretion. 3 disulfide bridges follow: Cys-37–Cys-77, Cys-73–Cys-129, and Cys-118–Cys-138.

It belongs to the PBP/GOBP family. As to quaternary structure, homodimer.

The protein resides in the secreted. Its function is as follows. Colony queen number, a major feature of social organization, is associated with worker genotype for Gp-9. Colonies are headed by either a single reproductive queen (monogyne form) or multiple queens (polygyne form). Differences in worker Gp-9 genotypes between social forms may cause differences in workers' abilities to recognize queens and regulate their numbers. In Solenopsis tridens (Fire ant), this protein is Pheromone-binding protein Gp-9.